Here is a 432-residue protein sequence, read N- to C-terminus: MSNPVRFDRGHTDDLMSFLAASPSPYHAVTNAAERLEKAGFRQVAETDAWDSTSGGKYVVRGGALIAWYVPEGADPHTPFRIVGAHTDSPNLRVKPRPDSGAHGWRQIAVEIYGGPLLNSWLDRDLGLAGRLSLRDGSTRLVNIDRPLLRVPQLAIHLDRSVSTDGLKLDKQRHLQPIWGLGGDVRDGDLIAFLEAELGLSAGEVTGWDLMTHSVEAPSYLGRDNELLAGPRMDNLLSVHAGTAALTAVAAADASLAYIPVLAAFDHEENGSQSDTGADGPLLGSVLERSVFARSGSYEDRARAFAGSVCLSSDTGHAVHPNYAERHDPTHHPRAGGGPILKVNVNNRYATDGSGRAIFAAACEKANVPFQTFVSNNSMPCGTTIGPITAARHGIRTVDIGAAILSMHSARELCATDDPFLLANSLVAFLEG.

Residues histidine 86, histidine 157, and histidine 408 each contribute to the Zn(2+) site.

It belongs to the peptidase M18 family. Requires Zn(2+) as cofactor.

This Streptomyces avermitilis (strain ATCC 31267 / DSM 46492 / JCM 5070 / NBRC 14893 / NCIMB 12804 / NRRL 8165 / MA-4680) protein is Probable M18 family aminopeptidase 2.